The sequence spans 201 residues: Homeobox protein ceh-28 (201 aa).

The span at 72 to 84 (SYYSSPSQNQRSY) shows a compositional bias: polar residues. A disordered region spans residues 72–94 (SYYSSPSQNQRSYQNHRQHSNPD). The segment at residues 104–163 (KRKPRVLFTQHQVNELEERFKKQRYVTATEREELAQCLGLTATQVKIWFQNRRYKCKRLA) is a DNA-binding region (homeobox).

Belongs to the NK-2 homeobox family.

It is found in the nucleus. In terms of biological role, probable transcription factor that regulates neuronal differention, including synapse assembly of the cholinergic motor neuron M4. Activates expression of growth factor, neuropeptide and transcription factor genes, such as TGF-beta dbl-1, FMRFamide-like flp-5 and transcription repressor zag-1, in the M4 neuron. Required for pharynx peristalsis. The protein is Homeobox protein ceh-28 of Caenorhabditis elegans.